The chain runs to 90 residues: Acylphosphatase (90 aa).

The region spanning cysteine 5–leucine 90 is the Acylphosphatase-like domain. Residues arginine 20 and asparagine 38 contribute to the active site.

Belongs to the acylphosphatase family.

The catalysed reaction is an acyl phosphate + H2O = a carboxylate + phosphate + H(+). The protein is Acylphosphatase (acyP) of Vibrio vulnificus (strain CMCP6).